Here is a 316-residue protein sequence, read N- to C-terminus: MLEQPYLDLAQKVLDEGHFKPDRTHTGTYSIFGHQMRFDLSKGFPLLTTKKVPFGLIKSELLWFLRGDTNIRFLLQHKNHIWDEWAFEKWVASPDYHGPDMTDFGHRSQKDPEFAASYREQMAKFDERILTDESFAAKYGDLGLVYGSQWRAWHTSRGDTIDQLGDVIEQIKTHPYSRRLIVSAWNPEDVPTMALPPCHTLFQFYVNDGKLSLQLYQRSADIFLGVPFNIASYALLTHLVAHECGLQVGDFIHTFGDAHLYVNHLDQIKEQLTRTPRQAPTLVLNPDKHDIFDFDMQDIKLLNYDPYPAIKAPVAV.

DUMP is bound by residues Arg-23 and Arg-178–Arg-179. Cys-198 (nucleophile) is an active-site residue. DUMP contacts are provided by residues Arg-218–Asp-221, Asn-229, and His-259–Tyr-261. Asp-221 is a binding site for (6R)-5,10-methylene-5,6,7,8-tetrahydrofolate. Ala-315 is a (6R)-5,10-methylene-5,6,7,8-tetrahydrofolate binding site.

The protein belongs to the thymidylate synthase family. Bacterial-type ThyA subfamily. In terms of assembly, homodimer.

Its subcellular location is the cytoplasm. The enzyme catalyses dUMP + (6R)-5,10-methylene-5,6,7,8-tetrahydrofolate = 7,8-dihydrofolate + dTMP. It participates in pyrimidine metabolism; dTTP biosynthesis. Functionally, catalyzes the reductive methylation of 2'-deoxyuridine-5'-monophosphate (dUMP) to 2'-deoxythymidine-5'-monophosphate (dTMP) while utilizing 5,10-methylenetetrahydrofolate (mTHF) as the methyl donor and reductant in the reaction, yielding dihydrofolate (DHF) as a by-product. This enzymatic reaction provides an intracellular de novo source of dTMP, an essential precursor for DNA biosynthesis. This is Thymidylate synthase from Lacticaseibacillus paracasei (strain ATCC 334 / BCRC 17002 / CCUG 31169 / CIP 107868 / KCTC 3260 / NRRL B-441) (Lactobacillus paracasei).